Here is a 42-residue protein sequence, read N- to C-terminus: Potassium channel toxin gamma-KTx 1.5 (42 aa).

Cystine bridges form between C5–C23, C11–C34, C20–C39, and C24–C41.

Belongs to the ergtoxin family. Gamma-KTx 1 subfamily. As to expression, expressed by the venom gland.

Its subcellular location is the secreted. Functionally, blocks Kv11/ERG potassium channels. The protein is Potassium channel toxin gamma-KTx 1.5 of Centruroides limpidus (Mexican scorpion).